The following is a 449-amino-acid chain: Glycine receptor subunit alpha-2 (449 aa).

The N-terminal stretch at 1–27 (MTRPSVKLLTTLLACLMEMLNFRVSSG) is a signal peptide. Residues 28 to 255 (KDPDLLSSSS…FHLERQMGYY (228 aa)) lie on the Extracellular side of the membrane. N-linked (GlcNAc...) asparagine glycosylation is present at N70. The glycine site is built by R97 and S161. R97 contacts strychnine. Cysteines 170 and 184 form a disulfide. Positions 224 and 226 each coordinate Zn(2+). C230 and C241 form a disulfide bridge. T236 is a glycine binding site. H247 lines the Zn(2+) pocket. A helical membrane pass occupies residues 256 to 276 (LIQMYIPSLLIVILSWVSFWI). At 277-282 (NMDAAP) the chain is on the cytoplasmic side. The chain crosses the membrane as a helical span at residues 283–302 (ARVALGITTVLTMTTQSSGS). Residues 303–313 (RASLPKVSYVK) lie on the Extracellular side of the membrane. A helical transmembrane segment spans residues 314 to 334 (AIDIWMAVCLLFVFAALLEYA). The Cytoplasmic segment spans residues 335 to 420 (GVNFVSRQQK…RAKRIDTISR (86 aa)). The helical transmembrane segment at 421–441 (AAFPLAFLIFNVFYWITYKII) threads the bilayer. Over 442–449 (RHESARKD) the chain is Extracellular.

It belongs to the ligand-gated ion channel (TC 1.A.9) family.

Its subcellular location is the postsynaptic cell membrane. The protein localises to the synapse. The protein resides in the cell membrane. It localises to the cell projection. The catalysed reaction is chloride(in) = chloride(out). Channel opening is triggered by extracellular glycine. Channel opening is also triggered by taurine and beta-alanine. Inhibited by strychnine. Its function is as follows. Subunit of heteromeric glycine-gated chloride channels. Plays a role in synaptic plasticity. Contributes to the generation of inhibitory postsynaptic currents, and is involved in the down-regulation of neuronal excitability. This is Glycine receptor subunit alpha-2 (glra2) from Danio rerio (Zebrafish).